The chain runs to 86 residues: Exodeoxyribonuclease 7 small subunit (86 aa).

The interval 67–86 (LSDPAQPEASEPFDPPSHDG) is disordered.

This sequence belongs to the XseB family. In terms of assembly, heterooligomer composed of large and small subunits.

It is found in the cytoplasm. The enzyme catalyses Exonucleolytic cleavage in either 5'- to 3'- or 3'- to 5'-direction to yield nucleoside 5'-phosphates.. In terms of biological role, bidirectionally degrades single-stranded DNA into large acid-insoluble oligonucleotides, which are then degraded further into small acid-soluble oligonucleotides. The protein is Exodeoxyribonuclease 7 small subunit of Stenotrophomonas maltophilia (strain K279a).